Reading from the N-terminus, the 444-residue chain is Exodeoxyribonuclease 7 large subunit (444 aa).

It belongs to the XseA family. Heterooligomer composed of large and small subunits.

The protein resides in the cytoplasm. The catalysed reaction is Exonucleolytic cleavage in either 5'- to 3'- or 3'- to 5'-direction to yield nucleoside 5'-phosphates.. In terms of biological role, bidirectionally degrades single-stranded DNA into large acid-insoluble oligonucleotides, which are then degraded further into small acid-soluble oligonucleotides. This chain is Exodeoxyribonuclease 7 large subunit, found in Pseudoalteromonas atlantica (strain T6c / ATCC BAA-1087).